The chain runs to 87 residues: Large ribosomal subunit protein bL27 (87 aa).

The interval 1 to 20 is disordered; sequence MAHKKAGGSSRNGRDSESKR.

Belongs to the bacterial ribosomal protein bL27 family.

This is Large ribosomal subunit protein bL27 from Thiobacillus denitrificans (strain ATCC 25259 / T1).